Reading from the N-terminus, the 140-residue chain is Nuclear receptor 2C2-associated protein (140 aa).

It belongs to the NR2C2AP family. Interacts with NR2C2/TR4.

The protein localises to the nucleus. May act as a repressor of NR2C2-mediated transactivation by suppressing the binding between NR2C2/TR4 and the TR4-response element in target genes. The polypeptide is Nuclear receptor 2C2-associated protein (Nr2c2ap) (Mus musculus (Mouse)).